Here is an 865-residue protein sequence, read N- to C-terminus: Protein translocase subunit SecA (865 aa).

ATP contacts are provided by residues Q93, 111 to 115 (GEGKT), and D501. Zn(2+) contacts are provided by C841, C843, C852, and C853.

Belongs to the SecA family. In terms of assembly, monomer and homodimer. Part of the essential Sec protein translocation apparatus which comprises SecA, SecYEG and auxiliary proteins SecDF-YajC and YidC. Zn(2+) serves as cofactor.

The protein localises to the cell inner membrane. It localises to the cytoplasm. It carries out the reaction ATP + H2O + cellular proteinSide 1 = ADP + phosphate + cellular proteinSide 2.. Its function is as follows. Part of the Sec protein translocase complex. Interacts with the SecYEG preprotein conducting channel. Has a central role in coupling the hydrolysis of ATP to the transfer of proteins into and across the cell membrane, serving as an ATP-driven molecular motor driving the stepwise translocation of polypeptide chains across the membrane. This is Protein translocase subunit SecA from Helicobacter pylori (strain HPAG1).